The primary structure comprises 104 residues: Transcription factor S (104 aa).

Residues cysteine 4, cysteine 7, cysteine 20, cysteine 22, cysteine 65, cysteine 68, cysteine 93, and cysteine 96 each coordinate Zn(2+). A C4-type zinc finger spans residues 4–22 (CPKCGAVMFPSEGKFKCQC). The TFIIS-type zinc finger occupies 61–101 (TRVECPKCGNMEAFWWLQQTRRADESETRFFRCTRCKHTWR).

Belongs to the archaeal RpoM/eukaryotic RPA12/RPB9/RPC11 RNA polymerase family.

Functionally, induces RNA cleavage activity in the RNA polymerase. In its presence, the cleavage activity of the RNA polymerase truncates the RNA back to position +15 in a stepwise manner by releasing mainly dinucleotides from the 3'-end of the nascent RNA. The truncated RNAs are able to continue elongation. Involved in transcriptional proofreading and fidelity. Misincorporation of nucleotides during elongation of transcription leads to arrested elongation complexes which are rescued by TFS-promoted removal of a dinucleotide from the 3'-end. TFS is able to induce a cleavage resynthesis cycle in stalled elongation complexes (resulting from the next missing nucleotide or a reduced incorporation rate of a wrong nucleotide) preventing misincorporation and enabling proofreading in a post-incorporation manner. Pausing of elongation complexes is the main determinant of TFS-induced RNA cleavage. The chain is Transcription factor S from Methanothermobacter thermautotrophicus (strain ATCC 29096 / DSM 1053 / JCM 10044 / NBRC 100330 / Delta H) (Methanobacterium thermoautotrophicum).